Consider the following 333-residue polypeptide: Glycerol-3-phosphate dehydrogenase [NAD(P)+] (333 aa).

NADPH contacts are provided by serine 13, tryptophan 14, arginine 34, and lysine 108. The sn-glycerol 3-phosphate site is built by lysine 108, glycine 137, and serine 139. NADPH is bound at residue alanine 141. Residues lysine 192, aspartate 245, serine 255, arginine 256, and asparagine 257 each contribute to the sn-glycerol 3-phosphate site. Lysine 192 serves as the catalytic Proton acceptor. Arginine 256 lines the NADPH pocket. Residue glutamate 282 coordinates NADPH.

It belongs to the NAD-dependent glycerol-3-phosphate dehydrogenase family.

Its subcellular location is the cytoplasm. The catalysed reaction is sn-glycerol 3-phosphate + NAD(+) = dihydroxyacetone phosphate + NADH + H(+). The enzyme catalyses sn-glycerol 3-phosphate + NADP(+) = dihydroxyacetone phosphate + NADPH + H(+). The protein operates within membrane lipid metabolism; glycerophospholipid metabolism. Functionally, catalyzes the reduction of the glycolytic intermediate dihydroxyacetone phosphate (DHAP) to sn-glycerol 3-phosphate (G3P), the key precursor for phospholipid synthesis. This is Glycerol-3-phosphate dehydrogenase [NAD(P)+] from Thioalkalivibrio sulfidiphilus (strain HL-EbGR7).